We begin with the raw amino-acid sequence, 167 residues long: Phospholipase A2 imperatoxin-1 (167 aa).

Ca(2+) is bound by residues W38, G40, and G42. Intrachain disulfides connect C39/C61, C60/C99, C67/C92, C90/C127, and C132/C144. H64 is a catalytic residue. D65 serves as a coordination point for Ca(2+). A glycan (N-linked (GlcNAc...) asparagine) is linked at N102. A propeptide spanning residues 136–140 (RRLAR) is cleaved from the precursor.

The protein belongs to the phospholipase A2 family. Group III subfamily. In terms of assembly, heterodimer composed of a large subunit and a small subunit; disulfide-linked. It depends on Ca(2+) as a cofactor. Expressed by the venom gland.

It localises to the secreted. It catalyses the reaction a 1,2-diacyl-sn-glycero-3-phosphocholine + H2O = a 1-acyl-sn-glycero-3-phosphocholine + a fatty acid + H(+). Phospholipase toxin, which may catalyze the calcium-dependent hydrolysis of the 2-acyl groups in 3-sn-phosphoglycerides. Inhibits both skeletal (RYR1) and cardiac (RYR2) ryanodine receptors (calcium release channels). Probably blocks ryanodine receptors by generating a lipid product. This Pandinus imperator (Emperor scorpion) protein is Phospholipase A2 imperatoxin-1.